The sequence spans 362 residues: tRNA/tmRNA (uracil-C(5))-methyltransferase (362 aa).

S-adenosyl-L-methionine is bound by residues Q186, Y214, N219, E235, and D295. C320 functions as the Nucleophile in the catalytic mechanism. Catalysis depends on E354, which acts as the Proton acceptor.

This sequence belongs to the class I-like SAM-binding methyltransferase superfamily. RNA M5U methyltransferase family. TrmA subfamily.

The enzyme catalyses uridine(54) in tRNA + S-adenosyl-L-methionine = 5-methyluridine(54) in tRNA + S-adenosyl-L-homocysteine + H(+). It carries out the reaction uridine(341) in tmRNA + S-adenosyl-L-methionine = 5-methyluridine(341) in tmRNA + S-adenosyl-L-homocysteine + H(+). Its function is as follows. Dual-specificity methyltransferase that catalyzes the formation of 5-methyluridine at position 54 (m5U54) in all tRNAs, and that of position 341 (m5U341) in tmRNA (transfer-mRNA). This Dechloromonas aromatica (strain RCB) protein is tRNA/tmRNA (uracil-C(5))-methyltransferase.